The sequence spans 346 residues: UDP-N-acetylenolpyruvoylglucosamine reductase (346 aa).

One can recognise an FAD-binding PCMH-type domain in the interval 17–187 (IESQAYALIE…VAVGFTLKKE (171 aa)). Residue Arg163 is part of the active site. The Proton donor role is filled by Ser233. Residue Glu329 is part of the active site.

This sequence belongs to the MurB family. The cofactor is FAD.

The protein localises to the cytoplasm. It catalyses the reaction UDP-N-acetyl-alpha-D-muramate + NADP(+) = UDP-N-acetyl-3-O-(1-carboxyvinyl)-alpha-D-glucosamine + NADPH + H(+). Its pathway is cell wall biogenesis; peptidoglycan biosynthesis. In terms of biological role, cell wall formation. This is UDP-N-acetylenolpyruvoylglucosamine reductase from Photobacterium profundum (strain SS9).